Consider the following 213-residue polypeptide: Large ribosomal subunit protein uL1 (213 aa).

It belongs to the universal ribosomal protein uL1 family. In terms of assembly, part of the 50S ribosomal subunit.

In terms of biological role, binds directly to 23S rRNA. Probably involved in E site tRNA release. Protein L1 is also a translational repressor protein, it controls the translation of its operon by binding to its mRNA. This is Large ribosomal subunit protein uL1 from Methanoculleus marisnigri (strain ATCC 35101 / DSM 1498 / JR1).